The sequence spans 369 residues: Phospho-N-acetylmuramoyl-pentapeptide-transferase (369 aa).

10 helical membrane-spanning segments follow: residues 30-50, 74-94, 97-117, 136-156, 177-197, 208-228, 244-264, 272-292, 297-317, and 346-366; these read LAIF…IRWM, GTPT…TLLW, LSNP…LLGF, IRLA…IVFA, YFVD…VGAA, GLAT…AYLV, GVGE…GFLW, IFMG…VAVA, IVLA…IIQV, and TVVI…LATL.

This sequence belongs to the glycosyltransferase 4 family. MraY subfamily. Mg(2+) serves as cofactor.

The protein resides in the cell inner membrane. It catalyses the reaction UDP-N-acetyl-alpha-D-muramoyl-L-alanyl-gamma-D-glutamyl-meso-2,6-diaminopimeloyl-D-alanyl-D-alanine + di-trans,octa-cis-undecaprenyl phosphate = di-trans,octa-cis-undecaprenyl diphospho-N-acetyl-alpha-D-muramoyl-L-alanyl-D-glutamyl-meso-2,6-diaminopimeloyl-D-alanyl-D-alanine + UMP. It functions in the pathway cell wall biogenesis; peptidoglycan biosynthesis. Functionally, catalyzes the initial step of the lipid cycle reactions in the biosynthesis of the cell wall peptidoglycan: transfers peptidoglycan precursor phospho-MurNAc-pentapeptide from UDP-MurNAc-pentapeptide onto the lipid carrier undecaprenyl phosphate, yielding undecaprenyl-pyrophosphoryl-MurNAc-pentapeptide, known as lipid I. This is Phospho-N-acetylmuramoyl-pentapeptide-transferase from Phenylobacterium zucineum (strain HLK1).